Consider the following 37-residue polypeptide: Potassium channel toxin alpha-KTx 2.19 (37 aa).

3 disulfide bridges follow: Cys7/Cys28, Cys13/Cys33, and Cys17/Cys35.

Expressed by the venom gland.

The protein localises to the secreted. Functionally, inhibitor of voltage-gated potassium channels. The chain is Potassium channel toxin alpha-KTx 2.19 from Rhopalurus junceus (Caribbean blue scorpion).